Here is a 142-residue protein sequence, read N- to C-terminus: Large ribosomal subunit protein uL11 (142 aa).

This sequence belongs to the universal ribosomal protein uL11 family. In terms of assembly, part of the ribosomal stalk of the 50S ribosomal subunit. Interacts with L10 and the large rRNA to form the base of the stalk. L10 forms an elongated spine to which L12 dimers bind in a sequential fashion forming a multimeric L10(L12)X complex. One or more lysine residues are methylated.

In terms of biological role, forms part of the ribosomal stalk which helps the ribosome interact with GTP-bound translation factors. The chain is Large ribosomal subunit protein uL11 from Maricaulis maris (strain MCS10) (Caulobacter maris).